The primary structure comprises 99 residues: CLAVATA3/ESR (CLE)-related protein 17 (99 aa).

An N-terminal signal peptide occupies residues 1–21 (MTHVLVRRQGQGKKRRWDVNM). A compositionally biased stretch (basic and acidic residues) spans 77–89 (LSRDDIYGDDKRV). The tract at residues 77–99 (LSRDDIYGDDKRVVHTGPNPLHN) is disordered. Pro-94 bears the Hydroxyproline mark. An O-linked (Ara...) hydroxyproline glycan is attached at Pro-94.

The protein belongs to the CLV3/ESR signal peptide family. Post-translationally, the O-glycosylation (arabinosylation) of the hydroxyproline Pro-94 enhances binding affinity of the CLE17p peptide for its receptor. As to expression, mostly expressed in seedlings, roots, flowers, stems and apex, and, to a lower extent, in leaves and siliques.

Its subcellular location is the secreted. It localises to the extracellular space. In terms of biological role, extracellular signal peptide that regulates cell fate. Represses root apical meristem maintenance. Regulates the transition of protophloem cells from proliferation to differentiation, thus impinging on postembryonic growth capacity of the root meristem; this signaling pathway requires CRN and CLV2. This Arabidopsis thaliana (Mouse-ear cress) protein is CLAVATA3/ESR (CLE)-related protein 17.